The primary structure comprises 116 residues: Small ribosomal subunit protein uS13m (116 aa).

The tract at residues 92–116 is disordered; that stretch reads HQDGSPLRGQRTHTNARTARKQIRK.

This sequence belongs to the universal ribosomal protein uS13 family. As to quaternary structure, part of the small ribosomal subunit.

The protein localises to the mitochondrion. In terms of biological role, located at the top of the head of the small subunit, it contacts several helices of the 18S rRNA. In Triticum aestivum (Wheat), this protein is Small ribosomal subunit protein uS13m (RPS13).